Here is a 448-residue protein sequence, read N- to C-terminus: Phosphoglucosamine mutase (448 aa).

Residue Ser-100 is the Phosphoserine intermediate of the active site. Residues Ser-100, Asp-240, Asp-242, and Asp-244 each contribute to the Mg(2+) site. The residue at position 100 (Ser-100) is a Phosphoserine.

Belongs to the phosphohexose mutase family. It depends on Mg(2+) as a cofactor. Activated by phosphorylation.

It catalyses the reaction alpha-D-glucosamine 1-phosphate = D-glucosamine 6-phosphate. Catalyzes the conversion of glucosamine-6-phosphate to glucosamine-1-phosphate. In Bacillus cytotoxicus (strain DSM 22905 / CIP 110041 / 391-98 / NVH 391-98), this protein is Phosphoglucosamine mutase.